The sequence spans 104 residues: Flagellar hook-basal body complex protein FliE (104 aa).

The protein belongs to the FliE family.

It localises to the bacterial flagellum basal body. This chain is Flagellar hook-basal body complex protein FliE, found in Edwardsiella ictaluri (strain 93-146).